A 385-amino-acid chain; its full sequence is Polyketide synthase 3 (385 aa).

Residue cysteine 157 is part of the active site.

Belongs to the thiolase-like superfamily. Chalcone/stilbene synthases family. In terms of tissue distribution, expressed in male and female flowers, and seedlings.

It localises to the cytoplasm. Polyketide synthase responsible for the biosynthesis of secondary metabolites. This chain is Polyketide synthase 3 (PKSF3), found in Cannabis sativa (Hemp).